The chain runs to 210 residues: Large ribosomal subunit protein uL16 (210 aa).

Belongs to the universal ribosomal protein uL16 family. Component of the large ribosomal subunit. Mature ribosomes consist of a small (40S) and a large (60S) subunit. The 40S subunit contains about 33 different proteins and 1 molecule of RNA (18S). The 60S subunit contains about 49 different proteins and 3 molecules of RNA (28S, 5.8S and 5S).

The protein localises to the cytoplasm. Component of the large ribosomal subunit. Plays a role in the formation of actively translating ribosomes. Functionally, (Microbial infection) Seems to bind to the leucine zipper of viral and cellular JUN. In Gallus gallus (Chicken), this protein is Large ribosomal subunit protein uL16.